A 420-amino-acid chain; its full sequence is MAP kinase-interacting serine/threonine-protein kinase 1 (420 aa).

A disordered region spans residues 1-25 (MGSSEPIPIAESDKRKKKKRKARAT). Position 27 is a phosphoserine; by PAK2 (serine 27). Residues 37-321 (KLTSELLGEG…AAQVLQHPWV (285 aa)) form the Protein kinase domain. ATP contacts are provided by residues 43–51 (LGEGANAKV) and lysine 66. The active-site Proton acceptor is aspartate 158. Residues serine 168 and serine 173 each carry the phosphoserine modification. Threonine 197, threonine 202, and threonine 332 each carry phosphothreonine. A disordered region spans residues 386 to 420 (LSPPSKSRLARRRALAQAGRSGDAPPSPTPTTPAP). Low complexity predominate over residues 400-409 (LAQAGRSGDA). Pro residues predominate over residues 410–420 (PPSPTPTTPAP).

The protein belongs to the protein kinase superfamily. CAMK Ser/Thr protein kinase family. In terms of assembly, interacts with the C-terminal regions of EIF4G1 and EIF4G2. Also binds to dephosphorylated ERK1 and ERK2, and to the p38 kinases. It depends on Mg(2+) as a cofactor. Post-translationally, dual phosphorylation of Thr-197 and Thr-202 activates the kinase. Phosphorylation of Thr-332 activates the kinase. MAPK3/ERK1 is one of the kinases which activate MKNK1/MNK1. Phosphorylation by PAK2 leads to a reduced phosphorylation of EIF4G1.

The enzyme catalyses L-seryl-[protein] + ATP = O-phospho-L-seryl-[protein] + ADP + H(+). It carries out the reaction L-threonyl-[protein] + ATP = O-phospho-L-threonyl-[protein] + ADP + H(+). Phosphorylated and activated by the p38 kinases and kinases in the Erk pathway. May play a role in the response to environmental stress and cytokines. Appears to regulate translation by phosphorylating EIF4E, thus increasing the affinity of this protein for the 7-methylguanosine-containing mRNA cap. This Bos taurus (Bovine) protein is MAP kinase-interacting serine/threonine-protein kinase 1 (MKNK1).